Here is a 408-residue protein sequence, read N- to C-terminus: 26S proteasome regulatory subunit 6B homolog (408 aa).

At A2 the chain carries N-acetylalanine. The residue at position 16 (S16) is a Phosphoserine. The stretch at E28–V75 forms a coiled coil. G196–T203 serves as a coordination point for ATP.

It belongs to the AAA ATPase family. In terms of assembly, component of the 19S regulatory particle (RP/PA700) base subcomplex of the 26S proteasome. The 26S proteasome is composed of a core protease (CP), known as the 20S proteasome, capped at one or both ends by the 19S regulatory particle (RP/PA700). The RP/PA700 complex is composed of at least 17 different subunits in two subcomplexes, the base and the lid, which form the portions proximal and distal to the 20S proteolytic core, respectively. In terms of tissue distribution, expressed in dark-grown etiolated seedlings, roots, leaves, stems and flowers.

The protein localises to the cytoplasm. It is found in the nucleus. The 26S proteasome is involved in the ATP-dependent degradation of ubiquitinated proteins. The regulatory (or ATPase) complex confers ATP dependency and substrate specificity to the 26S complex. In Arabidopsis thaliana (Mouse-ear cress), this protein is 26S proteasome regulatory subunit 6B homolog (RPT3).